The following is a 199-amino-acid chain: Early nodulin-like protein 3 (199 aa).

The signal sequence occupies residues 1-23; that stretch reads MGLVMRFDLYLMFVMLMGLGFTI. One can recognise a Phytocyanin domain in the interval 27 to 128; that stretch reads YKFYVGGKDG…GQKLAVKVLS (102 aa). 2 N-linked (GlcNAc...) asparagine glycosylation sites follow: asparagine 57 and asparagine 83. Cysteine 82 and cysteine 116 form a disulfide bridge. Positions 130–180 are disordered; that stretch reads VHHSHSPRHTSPSPSPVHQELSSPGPSPGVEPSSDSNSRVPAPGPATAPNS. Residues 138–165 are compositionally biased toward low complexity; that stretch reads HTSPSPSPVHQELSSPGPSPGVEPSSDS. Residue asparagine 179 is the site of GPI-anchor amidated asparagine attachment. The propeptide at 180-199 is removed in mature form; it reads SAGLVGPGMVVLVIMISSLF.

The protein belongs to the early nodulin-like (ENODL) family. In terms of tissue distribution, confined to flowers.

The protein localises to the cell membrane. May act as a carbohydrate transporter. The polypeptide is Early nodulin-like protein 3 (Arabidopsis thaliana (Mouse-ear cress)).